The following is a 106-amino-acid chain: Urease subunit beta (106 aa).

Belongs to the urease beta subunit family. As to quaternary structure, heterotrimer of UreA (gamma), UreB (beta) and UreC (alpha) subunits. Three heterotrimers associate to form the active enzyme.

Its subcellular location is the cytoplasm. The catalysed reaction is urea + 2 H2O + H(+) = hydrogencarbonate + 2 NH4(+). It participates in nitrogen metabolism; urea degradation; CO(2) and NH(3) from urea (urease route): step 1/1. In Parasynechococcus marenigrum (strain WH8102), this protein is Urease subunit beta.